We begin with the raw amino-acid sequence, 431 residues long: Gamma-glutamyl phosphate reductase (431 aa).

The protein belongs to the gamma-glutamyl phosphate reductase family.

The protein localises to the cytoplasm. It carries out the reaction L-glutamate 5-semialdehyde + phosphate + NADP(+) = L-glutamyl 5-phosphate + NADPH + H(+). Its pathway is amino-acid biosynthesis; L-proline biosynthesis; L-glutamate 5-semialdehyde from L-glutamate: step 2/2. Its function is as follows. Catalyzes the NADPH-dependent reduction of L-glutamate 5-phosphate into L-glutamate 5-semialdehyde and phosphate. The product spontaneously undergoes cyclization to form 1-pyrroline-5-carboxylate. This is Gamma-glutamyl phosphate reductase from Bifidobacterium longum subsp. infantis (strain ATCC 15697 / DSM 20088 / JCM 1222 / NCTC 11817 / S12).